A 308-amino-acid chain; its full sequence is Probable inositol oxygenase (308 aa).

Substrate contacts are provided by residues R49 and 106–108; that span reads DDS. Positions 119, 144, and 145 each coordinate Fe cation. Substrate-binding positions include K148 and 165–166; that span reads GD. Fe cation contacts are provided by H217, H243, and D276. A substrate-binding site is contributed by 243–244; it reads HS.

Belongs to the myo-inositol oxygenase family. Requires Fe cation as cofactor.

The protein resides in the cytoplasm. It carries out the reaction myo-inositol + O2 = D-glucuronate + H2O + H(+). Its pathway is polyol metabolism; myo-inositol degradation into D-glucuronate; D-glucuronate from myo-inositol: step 1/1. Functionally, involved in the biosynthesis of UDP-glucuronic acid (UDP-GlcA), providing nucleotide sugars for cell-wall polymers. May be also involved in plant ascorbate biosynthesis. This Oryza sativa subsp. japonica (Rice) protein is Probable inositol oxygenase.